The chain runs to 402 residues: MSRVSQARNLGKYFLLIDNMLVVLGFFVVFPLISIRFVDQMGWAAVMVGIALGLRQFIQQGLGIFGGAIADRFGAKPMIVTGMLMRAAGFATMGIAHEPWLLWFSCFLSGLGGTLFDPPRSALVVKLIRPEQRGRFFSLLMMQDSAGAVIGALLGSWLLQYDFRLVCATGAILFILCALFNAWLLPAWKLSTARTPVREGMRRVMSNKRFVTYVLTLAGYYMLAVQVMLMLPIMVNDIAGSPAAVKWMYAIEACLSLTLLYPIARWSEKRFRLEHRLMAGLLVMSLSMLPIGMVGNLQQLFTLICAFYIGSVIAEPARETLSASPADARARGSYMGFSRLGLAIGGAISYIGGGWLFDMGKALAQPELPWMMLGIIGFITFLALGWQFSHKRTPRRMLEPGA.

The Cytoplasmic portion of the chain corresponds to 1–12 (MSRVSQARNLGK). A helical transmembrane segment spans residues 13–33 (YFLLIDNMLVVLGFFVVFPLI). Residues 34–98 (SIRFVDQMGW…GFATMGIAHE (65 aa)) are Periplasmic-facing. Residues 99 to 116 (PWLLWFSCFLSGLGGTLF) form a helical membrane-spanning segment. At 117-138 (DPPRSALVVKLIRPEQRGRFFS) the chain is on the cytoplasmic side. The helical transmembrane segment at 139-159 (LLMMQDSAGAVIGALLGSWLL) threads the bilayer. Topologically, residues 160–164 (QYDFR) are periplasmic. The helical transmembrane segment at 165–185 (LVCATGAILFILCALFNAWLL) threads the bilayer. Over 186–213 (PAWKLSTARTPVREGMRRVMSNKRFVTY) the chain is Cytoplasmic. Residues 214 to 234 (VLTLAGYYMLAVQVMLMLPIM) traverse the membrane as a helical segment. Residues 235–243 (VNDIAGSPA) lie on the Periplasmic side of the membrane. A helical transmembrane segment spans residues 244–264 (AVKWMYAIEACLSLTLLYPIA). The Cytoplasmic portion of the chain corresponds to 265-276 (RWSEKRFRLEHR). Residues 277–297 (LMAGLLVMSLSMLPIGMVGNL) traverse the membrane as a helical segment. The Periplasmic portion of the chain corresponds to 298–299 (QQ). A helical membrane pass occupies residues 300 to 320 (LFTLICAFYIGSVIAEPARET). Topologically, residues 321 to 339 (LSASPADARARGSYMGFSR) are cytoplasmic. A helical transmembrane segment spans residues 340–360 (LGLAIGGAISYIGGGWLFDMG). The Periplasmic portion of the chain corresponds to 361–367 (KALAQPE). Residues 368–388 (LPWMMLGIIGFITFLALGWQF) form a helical membrane-spanning segment. At 389–402 (SHKRTPRRMLEPGA) the chain is on the cytoplasmic side.

Belongs to the major facilitator superfamily. DHA1 family. MdtH (TC 2.A.1.2.21) subfamily.

It is found in the cell inner membrane. This Salmonella typhi protein is Multidrug resistance protein MdtH.